Here is a 547-residue protein sequence, read N- to C-terminus: MASGSSGGGYADEKGPGAATMQALGLQQQHGGGGEVEEESSEMGEKTAARTRLSGLLWHGGSAYDAWFSCASNQVAQVLLTLPYSFAQLGMASGLLFQLFYGLLGSWTAYLISILYLEYRTRKERDKVDFRNHVIQWFEVLDGLLGRHWRNVGLAFNCTFLLFGSVIQLIGCASNIYYINDHLDKRTWTYIFGACCATTVFIPSFHNYRIWSFLGLLMTTYTAWYIAVASLIHGQVEGVAHSGPTSIVLYFTGATNILYTFGGHAVTVEIMHAMWRPQKFKAIYLLATVYVLTLTLPSASAAYWAFGDALLTHSNALALLPRTPWRDAAVVLMLIHQFITFGFACTPLYFVWEKLVGLHGCPSLCKRAAARLPVVLPIWFLAIIFPFFGPINSAVGSLLVSFTVYIIPSLAYMVTFRSPQSRQNAVERPPRFAGGWTGAYVINSFVVAWVLVVGFGFGGWASITNFVHQVDTFGLFAKCYQCPPHPAAAALSPPGAIAPAPASMLPPFNSTAAGIFAAPVPSPAPAPAPMHFVLGHHHHHRHHRHGL.

Topologically, residues 1–74 (MASGSSGGGY…DAWFSCASNQ (74 aa)) are cytoplasmic. Residues 75-92 (VAQVLLTLPYSFAQLGMA) form a helical membrane-spanning segment. Residues 93 to 94 (SG) are Extracellular-facing. Residues 95 to 115 (LLFQLFYGLLGSWTAYLISIL) form a helical membrane-spanning segment. The Cytoplasmic portion of the chain corresponds to 116–151 (YLEYRTRKERDKVDFRNHVIQWFEVLDGLLGRHWRN). Residues 152-172 (VGLAFNCTFLLFGSVIQLIGC) form a helical membrane-spanning segment. Over 173-187 (ASNIYYINDHLDKRT) the chain is Extracellular. A helical membrane pass occupies residues 188-208 (WTYIFGACCATTVFIPSFHNY). The Cytoplasmic portion of the chain corresponds to 209–211 (RIW). Residues 212-232 (SFLGLLMTTYTAWYIAVASLI) traverse the membrane as a helical segment. At 233-247 (HGQVEGVAHSGPTSI) the chain is on the extracellular side. Residues 248 to 268 (VLYFTGATNILYTFGGHAVTV) form a helical membrane-spanning segment. Topologically, residues 269–281 (EIMHAMWRPQKFK) are cytoplasmic. The helical transmembrane segment at 282–302 (AIYLLATVYVLTLTLPSASAA) threads the bilayer. The Extracellular portion of the chain corresponds to 303 to 329 (YWAFGDALLTHSNALALLPRTPWRDAA). A helical transmembrane segment spans residues 330-350 (VVLMLIHQFITFGFACTPLYF). Residues 351–371 (VWEKLVGLHGCPSLCKRAAAR) lie on the Cytoplasmic side of the membrane. Residues 372 to 392 (LPVVLPIWFLAIIFPFFGPIN) form a helical membrane-spanning segment. Position 393 (S393) is a topological domain, extracellular. The helical transmembrane segment at 394–414 (AVGSLLVSFTVYIIPSLAYMV) threads the bilayer. At 415–440 (TFRSPQSRQNAVERPPRFAGGWTGAY) the chain is on the cytoplasmic side. Residues 441-461 (VINSFVVAWVLVVGFGFGGWA) form a helical membrane-spanning segment. The Extracellular segment spans residues 462–547 (SITNFVHQVD…HHHRHHRHGL (86 aa)). Residue N509 is glycosylated (N-linked (GlcNAc...) asparagine).

The protein belongs to the amino acid/polyamine transporter 2 family. Amino acid/auxin permease (AAAP) (TC 2.A.18.1) subfamily.

It localises to the cell membrane. Functionally, carrier protein involved in proton-driven auxin influx. May mediate the formation of auxin gradient from developing leaves (site of auxin biosynthesis) to tips. The protein is Auxin transporter-like protein 3 of Oryza sativa subsp. japonica (Rice).